We begin with the raw amino-acid sequence, 154 residues long: MSEKNQLQVEAIRHGSVIDHVPAGQGIKILKLFQLIETQERITVGFNLKSGALGKKDLIKIENTRLTAEQANQLALFAPKATVNIIEDFAVVKKHQLELPEFITGVFHCPNSNCISHNEPVDSYFRVREVKGVVRMKCKYCEKSFTQDIVSERY.

Zn(2+) is bound by residues C109, C114, C138, and C141.

This sequence belongs to the PyrI family. Contains catalytic and regulatory chains. Requires Zn(2+) as cofactor.

In terms of biological role, involved in allosteric regulation of aspartate carbamoyltransferase. This chain is Aspartate carbamoyltransferase regulatory chain, found in Aeromonas salmonicida (strain A449).